The sequence spans 301 residues: GTPase Era (301 aa).

Positions 7–175 constitute an Era-type G domain; that stretch reads YCGFIAIVGR…AGIVRKHLPE (169 aa). The tract at residues 15–22 is G1; the sequence is GRPNVGKS. 15–22 is a GTP binding site; that stretch reads GRPNVGKS. Residues 41 to 45 are G2; it reads QTTRH. Positions 62 to 65 are G3; that stretch reads DTPG. GTP-binding positions include 62 to 66 and 124 to 127; these read DTPGL and NKVD. The G4 stretch occupies residues 124–127; the sequence is NKVD. Residues 154–156 are G5; it reads LSA. One can recognise a KH type-2 domain in the interval 198 to 283; the sequence is IREKLMRFLG…HLELWVKVKS (86 aa).

This sequence belongs to the TRAFAC class TrmE-Era-EngA-EngB-Septin-like GTPase superfamily. Era GTPase family. In terms of assembly, monomer.

The protein resides in the cytoplasm. Its subcellular location is the cell inner membrane. An essential GTPase that binds both GDP and GTP, with rapid nucleotide exchange. Plays a role in 16S rRNA processing and 30S ribosomal subunit biogenesis and possibly also in cell cycle regulation and energy metabolism. This chain is GTPase Era, found in Enterobacter sp. (strain 638).